Here is a 766-residue protein sequence, read N- to C-terminus: MEEIKPASASCVSKEKPSKVSDLISRFEGGSSLSNYSDLKKESAVNLNAPRTPGRHGLTTTPQQKLLSQHLPQRQGNDTDKTQGAQTCVANGVMAAQNQMECEEEKAATLSSDTSIQASEPLLDTHIVNGERDETATAPASPTTDSCDGNASDSSYRTPGIGPVLPLEERGAETETKVQERENGESPLELEQLDQHHEMKETNEQKLHKIANELLLTERAYVNRLDLLDQVFYCKLLEEANRGSFPAEMVNKIFSNISSINAFHSKFLLPELEKRMQEWETTPRIGDILQKLAPFLKMYGEYVKGFDNAMELVKNMTERIPQFKSVVEEIQKQKICGSLTLQHHMLEPVQRIPRYEMLLKDYLRKLPPDSLDWNDAKKSLEIISTAASHSNSAIRKMENLKKLLEIYEMLGEEEDIVNPSNELIKEGQILKLAARNTSAQERYLFLFNNMLLYCVPKFSLVGSKFTVRTRVGIDGMKIVETQNEEYPHTFQVSGKERTLELQASSAQDKEEWIKALQETIDAFHQRHETFRNAIAKDNDIHSEVSTAELGKRAPRWIRDNEVTMCMKCKEPFNALTRRRHHCRACGYVVCWKCSDYKAQLEYDGGKLSKVCKDCYQIISGFTDSEEKKRKGILEIESAEVSGNSVVCSFLQYMEKSKPWQKAWCVIPKQDPLVLYMYGAPQDVRAQATIPLLGYVVDEMPRSADLPHSFKLTQSKSVHSFAADSEELKQKWLKVILLAVTGETPGGPNEHPATLDDHPEPKKKSEC.

3 disordered regions span residues 1–20 (MEEI…PSKV), 46–83 (NLNA…DKTQ), and 134–188 (ETAT…ESPL). Positions 1 to 150 (MEEIKPASAS…SPTTDSCDGN (150 aa)) are actin filament-binding. 2 stretches are compositionally biased toward polar residues: residues 58–83 (LTTT…DKTQ) and 145–157 (DSCD…SSYR). A compositionally biased stretch (basic and acidic residues) spans 167-184 (LEERGAETETKVQERENG). The region spanning 206–393 (KLHKIANELL…STAASHSNSA (188 aa)) is the DH domain. The PH 1 domain occupies 422 to 521 (ELIKEGQILK…WIKALQETID (100 aa)). Residues 559–619 (DNEVTMCMKC…VCKDCYQIIS (61 aa)) form an FYVE-type zinc finger. Positions 565, 568, 582, 585, 590, 593, 611, and 614 each coordinate Zn(2+). Residues 643–740 (NSVVCSFLQY…WLKVILLAVT (98 aa)) form the PH 2 domain. Ser-702 and Ser-716 each carry phosphoserine. The segment at 742–766 (ETPGGPNEHPATLDDHPEPKKKSEC) is disordered. The segment covering 752–766 (ATLDDHPEPKKKSEC) has biased composition (basic and acidic residues).

In terms of assembly, homooligomer. As to expression, expressed in different tissues, including brain, cerebellum, peripheral nerve, skeletal muscle, heart, uterus, placenta and testis.

It localises to the cytoplasm. It is found in the cytoskeleton. The protein localises to the cell projection. The protein resides in the filopodium. Functionally, activates CDC42, a member of the Ras-like family of Rho- and Rac proteins, by exchanging bound GDP for free GTP. Plays a role in regulating the actin cytoskeleton and cell shape. Activates MAPK8. The chain is FYVE, RhoGEF and PH domain-containing protein 4 (FGD4) from Homo sapiens (Human).